The sequence spans 397 residues: Elongation factor Tu (397 aa).

The tr-type G domain maps to 10–206; that stretch reads KPHVNIGTIG…AVDSYIPTPE (197 aa). Positions 19–26 are G1; it reads GHVDHGKT. 19–26 serves as a coordination point for GTP; it reads GHVDHGKT. Position 26 (threonine 26) interacts with Mg(2+). Residues 60–64 are G2; it reads GITIN. Residues 81–84 are G3; that stretch reads DCPG. GTP contacts are provided by residues 81–85 and 136–139; these read DCPGH and NKAD. The interval 136-139 is G4; the sequence is NKAD. Residues 174-176 are G5; sequence SAL.

It belongs to the TRAFAC class translation factor GTPase superfamily. Classic translation factor GTPase family. EF-Tu/EF-1A subfamily. In terms of assembly, monomer.

Its subcellular location is the cytoplasm. The enzyme catalyses GTP + H2O = GDP + phosphate + H(+). Its function is as follows. GTP hydrolase that promotes the GTP-dependent binding of aminoacyl-tRNA to the A-site of ribosomes during protein biosynthesis. This Clostridium perfringens (strain ATCC 13124 / DSM 756 / JCM 1290 / NCIMB 6125 / NCTC 8237 / Type A) protein is Elongation factor Tu.